Reading from the N-terminus, the 189-residue chain is Putative biopolymer transport protein ExbB-like 1 (189 aa).

3 helical membrane-spanning segments follow: residues 14-34, 99-119, and 147-167; these read FVTTLVLVWISLYLVMTLWVF, LVVLSIISSTAPFIGLFGTVV, and LIATAAGILAAIPAYSFYLIL.

The protein belongs to the ExbB/TolQ family.

The protein localises to the cell inner membrane. This Helicobacter pylori (strain J99 / ATCC 700824) (Campylobacter pylori J99) protein is Putative biopolymer transport protein ExbB-like 1.